A 90-amino-acid polypeptide reads, in one-letter code: Mitochondrial import inner membrane translocase subunit Tim10 (90 aa).

The Twin CX3C motif signature appears at 37 to 62 (CHSKCINKSYGDSDITKQEALCLDRC). 2 cysteine pairs are disulfide-bonded: Cys-37-Cys-62 and Cys-41-Cys-58.

The protein belongs to the small Tim family. As to quaternary structure, heterohexamer; composed of 3 copies of TIM9 and 3 copies of TIM10, named soluble 70 kDa complex. Associates directly with the TIM22 complex, whose core is composed of TIM22 and TIM54. Interacts with the transmembrane regions of multi-pass transmembrane proteins in transit.

The protein localises to the mitochondrion inner membrane. In terms of biological role, mitochondrial intermembrane chaperone that participates in the import and insertion of multi-pass transmembrane proteins into the mitochondrial inner membrane. Also required for the transfer of beta-barrel precursors from the TOM complex to the sorting and assembly machinery (SAM complex) of the outer membrane. Acts as a chaperone-like protein that protects the hydrophobic precursors from aggregation and guide them through the mitochondrial intermembrane space. The protein is Mitochondrial import inner membrane translocase subunit Tim10 (TIM10) of Pichia sorbitophila (strain ATCC MYA-4447 / BCRC 22081 / CBS 7064 / NBRC 10061 / NRRL Y-12695) (Hybrid yeast).